The sequence spans 256 residues: NH(3)-dependent NAD(+) synthetase (256 aa).

29 to 36 provides a ligand contact to ATP; the sequence is GISGGIDS. Position 35 (aspartate 35) interacts with Mg(2+). Arginine 115 lines the deamido-NAD(+) pocket. Threonine 135 contributes to the ATP binding site. A Mg(2+)-binding site is contributed by glutamate 140. Residues lysine 148 and aspartate 155 each contribute to the deamido-NAD(+) site. Positions 164 and 186 each coordinate ATP. Residue 245-246 participates in deamido-NAD(+) binding; sequence HK.

The protein belongs to the NAD synthetase family. In terms of assembly, homodimer.

The enzyme catalyses deamido-NAD(+) + NH4(+) + ATP = AMP + diphosphate + NAD(+) + H(+). The protein operates within cofactor biosynthesis; NAD(+) biosynthesis; NAD(+) from deamido-NAD(+) (ammonia route): step 1/1. Functionally, catalyzes the ATP-dependent amidation of deamido-NAD to form NAD. Uses ammonia as a nitrogen source. The sequence is that of NH(3)-dependent NAD(+) synthetase from Methanosarcina mazei (strain ATCC BAA-159 / DSM 3647 / Goe1 / Go1 / JCM 11833 / OCM 88) (Methanosarcina frisia).